The chain runs to 82 residues: Small ribosomal subunit protein bS16 (82 aa).

Belongs to the bacterial ribosomal protein bS16 family.

The protein is Small ribosomal subunit protein bS16 of Desulfosudis oleivorans (strain DSM 6200 / JCM 39069 / Hxd3) (Desulfococcus oleovorans).